The primary structure comprises 397 residues: Tryptophan synthase beta chain (397 aa).

An N6-(pyridoxal phosphate)lysine modification is found at Lys87.

This sequence belongs to the TrpB family. As to quaternary structure, tetramer of two alpha and two beta chains. Pyridoxal 5'-phosphate serves as cofactor.

The catalysed reaction is (1S,2R)-1-C-(indol-3-yl)glycerol 3-phosphate + L-serine = D-glyceraldehyde 3-phosphate + L-tryptophan + H2O. It participates in amino-acid biosynthesis; L-tryptophan biosynthesis; L-tryptophan from chorismate: step 5/5. Its function is as follows. The beta subunit is responsible for the synthesis of L-tryptophan from indole and L-serine. This Klebsiella pneumoniae (strain 342) protein is Tryptophan synthase beta chain.